A 504-amino-acid chain; its full sequence is Cytochrome P450 6B7 (504 aa).

Cys-445 is a binding site for heme.

The protein belongs to the cytochrome P450 family. Heme serves as cofactor.

It is found in the endoplasmic reticulum membrane. The protein resides in the microsome membrane. It carries out the reaction an organic molecule + reduced [NADPH--hemoprotein reductase] + O2 = an alcohol + oxidized [NADPH--hemoprotein reductase] + H2O + H(+). The chain is Cytochrome P450 6B7 (CYP6B7) from Helicoverpa armigera (Cotton bollworm).